The following is a 424-amino-acid chain: Ribulose bisphosphate carboxylase (424 aa).

Lysine 159 (proton acceptor) is an active-site residue. Lysine 161 is a binding site for substrate. Residues lysine 185, aspartate 187, and glutamate 188 each coordinate Mg(2+). Residue lysine 185 is modified to N6-carboxylysine. Residue histidine 277 is the Proton acceptor of the active site. Residues arginine 278, histidine 310, 347 to 349 (SGG), and 369 to 372 (QAGG) contribute to the substrate site.

It belongs to the RuBisCO large chain family. Type III subfamily. Homodimer or homodecamer. In contrast to form I RuBisCO, the form III RuBisCO is composed solely of large subunits. It depends on Mg(2+) as a cofactor.

The enzyme catalyses 2 (2R)-3-phosphoglycerate + 2 H(+) = D-ribulose 1,5-bisphosphate + CO2 + H2O. It carries out the reaction D-ribulose 1,5-bisphosphate + O2 = 2-phosphoglycolate + (2R)-3-phosphoglycerate + 2 H(+). Its function is as follows. Catalyzes the addition of molecular CO(2) and H(2)O to ribulose 1,5-bisphosphate (RuBP), generating two molecules of 3-phosphoglycerate (3-PGA). Functions in an archaeal AMP degradation pathway, together with AMP phosphorylase and R15P isomerase. In Pyrococcus abyssi (strain GE5 / Orsay), this protein is Ribulose bisphosphate carboxylase.